Here is a 484-residue protein sequence, read N- to C-terminus: tRNA sulfurtransferase (484 aa).

In terms of domain architecture, THUMP spans 63 to 167; that stretch reads REMIERLTCT…LDRLFVIHRQ (105 aa). Residues 185 to 186, Lys267, Gly289, and Gln298 contribute to the ATP site; that span reads LM. A disulfide bond links Cys346 and Cys457. In terms of domain architecture, Rhodanese spans 405–483; the sequence is VLPGQIVIDI…GHTNVRVYRP (79 aa). Cys457 functions as the Cysteine persulfide intermediate in the catalytic mechanism.

This sequence belongs to the ThiI family.

Its subcellular location is the cytoplasm. It catalyses the reaction [ThiI sulfur-carrier protein]-S-sulfanyl-L-cysteine + a uridine in tRNA + 2 reduced [2Fe-2S]-[ferredoxin] + ATP + H(+) = [ThiI sulfur-carrier protein]-L-cysteine + a 4-thiouridine in tRNA + 2 oxidized [2Fe-2S]-[ferredoxin] + AMP + diphosphate. The enzyme catalyses [ThiS sulfur-carrier protein]-C-terminal Gly-Gly-AMP + S-sulfanyl-L-cysteinyl-[cysteine desulfurase] + AH2 = [ThiS sulfur-carrier protein]-C-terminal-Gly-aminoethanethioate + L-cysteinyl-[cysteine desulfurase] + A + AMP + 2 H(+). It participates in cofactor biosynthesis; thiamine diphosphate biosynthesis. Its function is as follows. Catalyzes the ATP-dependent transfer of a sulfur to tRNA to produce 4-thiouridine in position 8 of tRNAs, which functions as a near-UV photosensor. Also catalyzes the transfer of sulfur to the sulfur carrier protein ThiS, forming ThiS-thiocarboxylate. This is a step in the synthesis of thiazole, in the thiamine biosynthesis pathway. The sulfur is donated as persulfide by IscS. This Pseudomonas paraeruginosa (strain DSM 24068 / PA7) (Pseudomonas aeruginosa (strain PA7)) protein is tRNA sulfurtransferase.